Consider the following 274-residue polypeptide: NADPH-dependent 7-cyano-7-deazaguanine reductase (274 aa).

80 to 82 (VES) contributes to the substrate binding site. Position 82-83 (82-83 (SK)) interacts with NADPH. Residue Cys181 is the Thioimide intermediate of the active site. Asp188 acts as the Proton donor in catalysis. 220-221 (HE) is a binding site for substrate. 249 to 250 (RG) lines the NADPH pocket.

Belongs to the GTP cyclohydrolase I family. QueF type 2 subfamily. In terms of assembly, homodimer.

It localises to the cytoplasm. The catalysed reaction is 7-aminomethyl-7-carbaguanine + 2 NADP(+) = 7-cyano-7-deazaguanine + 2 NADPH + 3 H(+). The protein operates within tRNA modification; tRNA-queuosine biosynthesis. Functionally, catalyzes the NADPH-dependent reduction of 7-cyano-7-deazaguanine (preQ0) to 7-aminomethyl-7-deazaguanine (preQ1). The chain is NADPH-dependent 7-cyano-7-deazaguanine reductase from Burkholderia multivorans (strain ATCC 17616 / 249).